A 290-amino-acid chain; its full sequence is Fructose-1,6-bisphosphatase class 1 (290 aa).

The Mg(2+) site is built by Glu78, Asp96, Leu98, and Asp99. Residues 99 to 102 (DGSS), Tyr201, and Lys226 each bind substrate. Mg(2+) is bound at residue Glu232.

The protein belongs to the FBPase class 1 family. Homotetramer. Requires Mg(2+) as cofactor.

It localises to the cytoplasm. The catalysed reaction is beta-D-fructose 1,6-bisphosphate + H2O = beta-D-fructose 6-phosphate + phosphate. It participates in carbohydrate biosynthesis; gluconeogenesis. The protein is Fructose-1,6-bisphosphatase class 1 of Helicobacter pylori (strain HPAG1).